The primary structure comprises 475 residues: tRNA-2-methylthio-N(6)-dimethylallyladenosine synthase (475 aa).

Positions 1–10 (MQETTVKRDG) are enriched in basic and acidic residues. Residues 1-22 (MQETTVKRDGASPSDAGTPATT) form a disordered region. In terms of domain architecture, MTTase N-terminal spans 27–144 (GKLYIRTFGC…LPDLIKRRRA (118 aa)). 6 residues coordinate [4Fe-4S] cluster: Cys-36, Cys-73, Cys-107, Cys-181, Cys-185, and Cys-188. A Radical SAM core domain is found at 167–400 (RVDGATAFVS…QALINQQAAA (234 aa)). The TRAM domain maps to 403–466 (QGMIGTRQRV…TNSLRGRVAG (64 aa)).

The protein belongs to the methylthiotransferase family. MiaB subfamily. Monomer. [4Fe-4S] cluster serves as cofactor.

It localises to the cytoplasm. The catalysed reaction is N(6)-dimethylallyladenosine(37) in tRNA + (sulfur carrier)-SH + AH2 + 2 S-adenosyl-L-methionine = 2-methylsulfanyl-N(6)-dimethylallyladenosine(37) in tRNA + (sulfur carrier)-H + 5'-deoxyadenosine + L-methionine + A + S-adenosyl-L-homocysteine + 2 H(+). In terms of biological role, catalyzes the methylthiolation of N6-(dimethylallyl)adenosine (i(6)A), leading to the formation of 2-methylthio-N6-(dimethylallyl)adenosine (ms(2)i(6)A) at position 37 in tRNAs that read codons beginning with uridine. This chain is tRNA-2-methylthio-N(6)-dimethylallyladenosine synthase, found in Bordetella parapertussis (strain 12822 / ATCC BAA-587 / NCTC 13253).